The chain runs to 326 residues: Vitamin B12 import system permease protein BtuC (326 aa).

The next 9 membrane-spanning stretches (helical) occupy residues 19-39 (LSVLMLLALLLSLCAGELWIL), 61-81 (LAVLLVGAALAISGAVMQALF), 88-108 (PGLLGVSNGAGVGLIAAVLLG), 112-132 (LPNWALGLCAIAGALIITLIL), 146-166 (LLAGVALGIICSALMTWAIYF), 184-204 (GGVDWRQSWLMLALIPVLLWI), 240-260 (GWMVGVSVALAGAIGFIGLVI), 274-294 (VLLPGCALAGASALLLADIVA), and 302-322 (ELPIGVVTATLGAPVFIWLLL).

It belongs to the binding-protein-dependent transport system permease family. FecCD subfamily. As to quaternary structure, the complex is composed of two ATP-binding proteins (BtuD), two transmembrane proteins (BtuC) and a solute-binding protein (BtuF).

The protein resides in the cell inner membrane. Its function is as follows. Part of the ABC transporter complex BtuCDF involved in vitamin B12 import. Involved in the translocation of the substrate across the membrane. The polypeptide is Vitamin B12 import system permease protein BtuC (Escherichia coli O6:K15:H31 (strain 536 / UPEC)).